The sequence spans 135 residues: MRPSSPSKDHYTQVPIKVQHRAAKRKRIRRKRVDLNCGCSYYVHINCHNHGFTHRGTHHCSSGDEWRLYLGGTKSPLFQDHSTRQQTVRNEPGHNNRPDTVQPQPEESVGTTSMLDGFQGLDDLTASDLAFLEGI.

A Nuclear localization signal motif is present at residues 17–32 (KVQHRAAKRKRIRRKR). A zinc finger lies at 37–54 (CGCSYYVHINCHNHGFTH). Positions 77–115 (LFQDHSTRQQTVRNEPGHNNRPDTVQPQPEESVGTTSML) are disordered. The segment covering 98–114 (PDTVQPQPEESVGTTSM) has biased composition (polar residues). The tract at residues 120–135 (GLDDLTASDLAFLEGI) is transactivation.

Belongs to the geminiviridae transcriptional activator protein family. Monomer. Homodimer. Homooligomer. Self-interaction correlates with nuclear localization and efficient activation of transcription. Monomers suppress local silencing by interacting with and inactivating host adenosine kinase 2 (ADK2) in the cytoplasm. Interacts with and inhibits host SNF1 kinase. Binds to ssDNA. Phosphorylated.

Its subcellular location is the host nucleus. The protein resides in the host cytoplasm. Functionally, strong activator of the late viral genes promoters. Enhances the expression of the capsid protein and nuclear shuttle protein. Acts as a suppressor of RNA-mediated gene silencing, also known as post-transcriptional gene silencing (PTGS), a mechanism of plant viral defense that limits the accumulation of viral RNAs. Suppresses the host RNA silencing by inhibiting adenosine kinase 2 (ADK2), a kinase involved in a general methylation pathway. Also suppresses the host basal defense by interacting with and inhibiting SNF1 kinase, a key regulator of cell metabolism implicated in innate antiviral defense. Determines pathogenicity. The sequence is that of Transcriptional activator protein from Indian cassava mosaic virus (ICMV).